Here is a 275-residue protein sequence, read N- to C-terminus: tRNA pseudouridine synthase A (275 aa).

Aspartate 56 acts as the Nucleophile in catalysis. Tyrosine 114 contacts substrate.

The protein belongs to the tRNA pseudouridine synthase TruA family. Homodimer.

It carries out the reaction uridine(38/39/40) in tRNA = pseudouridine(38/39/40) in tRNA. Formation of pseudouridine at positions 38, 39 and 40 in the anticodon stem and loop of transfer RNAs. This Polynucleobacter asymbioticus (strain DSM 18221 / CIP 109841 / QLW-P1DMWA-1) (Polynucleobacter necessarius subsp. asymbioticus) protein is tRNA pseudouridine synthase A.